Consider the following 419-residue polypeptide: L-rhamnose isomerase (419 aa).

Positions 262, 294, and 296 each coordinate Mn(2+).

This sequence belongs to the rhamnose isomerase family. As to quaternary structure, homotetramer. Requires Mn(2+) as cofactor.

Its subcellular location is the cytoplasm. It carries out the reaction L-rhamnopyranose = L-rhamnulose. It functions in the pathway carbohydrate degradation; L-rhamnose degradation; glycerone phosphate from L-rhamnose: step 1/3. In terms of biological role, catalyzes the interconversion of L-rhamnose and L-rhamnulose. This chain is L-rhamnose isomerase, found in Shigella sonnei (strain Ss046).